The sequence spans 210 residues: Large ribosomal subunit protein uL3 (210 aa).

It belongs to the universal ribosomal protein uL3 family. As to quaternary structure, part of the 50S ribosomal subunit. Forms a cluster with proteins L14 and L19.

Its function is as follows. One of the primary rRNA binding proteins, it binds directly near the 3'-end of the 23S rRNA, where it nucleates assembly of the 50S subunit. This Geobacter sulfurreducens (strain ATCC 51573 / DSM 12127 / PCA) protein is Large ribosomal subunit protein uL3.